Here is a 277-residue protein sequence, read N- to C-terminus: Large ribosomal subunit protein uL2 (277 aa).

The interval 222–277 is disordered; that stretch reads GSVMNPNDHPHGGGEGKSPVGHPGPLTPWGKPALGLKTRKNKKYSDKFIIKRKNKK.

It belongs to the universal ribosomal protein uL2 family. Part of the 50S ribosomal subunit. Forms a bridge to the 30S subunit in the 70S ribosome.

One of the primary rRNA binding proteins. Required for association of the 30S and 50S subunits to form the 70S ribosome, for tRNA binding and peptide bond formation. It has been suggested to have peptidyltransferase activity; this is somewhat controversial. Makes several contacts with the 16S rRNA in the 70S ribosome. This is Large ribosomal subunit protein uL2 from Clostridium kluyveri (strain NBRC 12016).